Reading from the N-terminus, the 171-residue chain is PRA1-like protein (171 aa).

The next 3 membrane-spanning stretches (helical) occupy residues 67 to 87, 119 to 139, and 140 to 160; these read AIIA…LIVI, VILA…ETII, and WLVG…EPPV.

The protein belongs to the PRA1 family.

The protein resides in the membrane. In Schizosaccharomyces pombe (strain 972 / ATCC 24843) (Fission yeast), this protein is PRA1-like protein.